Consider the following 456-residue polypeptide: tRNA modification GTPase MnmE (456 aa).

Residues R24, E81, and K120 each coordinate (6S)-5-formyl-5,6,7,8-tetrahydrofolate. A TrmE-type G domain is found at 216–379 (GMTVVIAGRP…LRDHLKGCMG (164 aa)). N226 contacts K(+). Residues 226-231 (NAGKSS), 245-251 (TDIAGTT), 270-273 (DTAG), and 335-338 (NKAD) each bind GTP. Residue S230 coordinates Mg(2+). K(+) is bound by residues T245, I247, and T250. T251 contacts Mg(2+). Residue K456 participates in (6S)-5-formyl-5,6,7,8-tetrahydrofolate binding.

This sequence belongs to the TRAFAC class TrmE-Era-EngA-EngB-Septin-like GTPase superfamily. TrmE GTPase family. In terms of assembly, homodimer. Heterotetramer of two MnmE and two MnmG subunits. K(+) is required as a cofactor.

It localises to the cytoplasm. In terms of biological role, exhibits a very high intrinsic GTPase hydrolysis rate. Involved in the addition of a carboxymethylaminomethyl (cmnm) group at the wobble position (U34) of certain tRNAs, forming tRNA-cmnm(5)s(2)U34. This is tRNA modification GTPase MnmE from Pseudomonas putida (strain ATCC 47054 / DSM 6125 / CFBP 8728 / NCIMB 11950 / KT2440).